The primary structure comprises 183 residues: Ribosome-recycling factor (183 aa).

Residues 134–156 (DANDELKKHQSEMSQDEVKGHQD) form a disordered region.

Belongs to the RRF family.

Its subcellular location is the cytoplasm. Functionally, responsible for the release of ribosomes from messenger RNA at the termination of protein biosynthesis. May increase the efficiency of translation by recycling ribosomes from one round of translation to another. This chain is Ribosome-recycling factor, found in Leptospira biflexa serovar Patoc (strain Patoc 1 / Ames).